Here is a 366-residue protein sequence, read N- to C-terminus: MAQQTPLYEEHHASGAKMVDFHGWMMPLHYGSQLDEHHQVRRDVGMFDVSHMTIVDLAGPRTRDFLRHLLANDVAKLTVPGKALYTGMLNASGGVIDDLIVYFLSEIEFRLVVNSETRDKDVEWITRHAEPYQVTVTVRDDLALIAVQGPQAQSKTQTLFSSQQRQAVSGMKPFFGVQANELFIATTGYTGEAGYEIALPATQAADFWRQLLAAGVKPCGLGARDTLRLEAGMNLYGQEMDEGISPLAANMGWTITWRPEGRDFIGREALEAQRAAGDGEQLVGLVMTEKGVLRNGLPVHFTDAAGNMQQGIITSGSFSPTLGVSIALARVPAGIGQQAIVLIRNREMPVKVTKPGFVRAGKAVAQ.

It belongs to the GcvT family. The glycine cleavage system is composed of four proteins: P, T, L and H.

It catalyses the reaction N(6)-[(R)-S(8)-aminomethyldihydrolipoyl]-L-lysyl-[protein] + (6S)-5,6,7,8-tetrahydrofolate = N(6)-[(R)-dihydrolipoyl]-L-lysyl-[protein] + (6R)-5,10-methylene-5,6,7,8-tetrahydrofolate + NH4(+). Functionally, the glycine cleavage system catalyzes the degradation of glycine. The polypeptide is Aminomethyltransferase (Sodalis glossinidius (strain morsitans)).